The sequence spans 363 residues: Ribosomal RNA large subunit methyltransferase M (363 aa).

S-adenosyl-L-methionine-binding positions include serine 187, 220 to 223 (CPGG), aspartate 239, aspartate 259, and aspartate 276. Lysine 305 (proton acceptor) is an active-site residue.

It belongs to the class I-like SAM-binding methyltransferase superfamily. RNA methyltransferase RlmE family. RlmM subfamily. In terms of assembly, monomer.

Its subcellular location is the cytoplasm. It carries out the reaction cytidine(2498) in 23S rRNA + S-adenosyl-L-methionine = 2'-O-methylcytidine(2498) in 23S rRNA + S-adenosyl-L-homocysteine + H(+). Its function is as follows. Catalyzes the 2'-O-methylation at nucleotide C2498 in 23S rRNA. The protein is Ribosomal RNA large subunit methyltransferase M of Shewanella loihica (strain ATCC BAA-1088 / PV-4).